The sequence spans 395 residues: Argininosuccinate synthase (395 aa).

Residues 9 to 17 (AYSGGLDTS) and A37 contribute to the ATP site. 2 residues coordinate L-citrulline: Y87 and S92. G117 contacts ATP. Residues T119, N123, and D124 each coordinate L-aspartate. N123 is a binding site for L-citrulline. Residues R127, S173, S182, E258, and Y270 each contribute to the L-citrulline site.

It belongs to the argininosuccinate synthase family. Type 1 subfamily. As to quaternary structure, homotetramer.

It is found in the cytoplasm. It carries out the reaction L-citrulline + L-aspartate + ATP = 2-(N(omega)-L-arginino)succinate + AMP + diphosphate + H(+). The protein operates within amino-acid biosynthesis; L-arginine biosynthesis; L-arginine from L-ornithine and carbamoyl phosphate: step 2/3. The polypeptide is Argininosuccinate synthase (Methanospirillum hungatei JF-1 (strain ATCC 27890 / DSM 864 / NBRC 100397 / JF-1)).